Here is a 682-residue protein sequence, read N- to C-terminus: Penicillin-binding protein activator LpoA (682 aa).

The first 26 residues, 1–26 (MLSSITVRTKSGRLIPLVLAATLLAA), serve as a signal peptide directing secretion. A lipid anchor (N-palmitoyl cysteine) is attached at Cys27. Cys27 carries S-diacylglycerol cysteine lipidation.

Belongs to the LpoA family. In terms of assembly, interacts with PBP1a.

The protein localises to the cell outer membrane. Its function is as follows. Regulator of peptidoglycan synthesis that is essential for the function of penicillin-binding protein 1A (PBP1a). This is Penicillin-binding protein activator LpoA from Edwardsiella ictaluri (strain 93-146).